The sequence spans 597 residues: MFS-type transporter FPY5 (597 aa).

The segment at 1 to 55 (MSETTGLPLKHLQGSPPGTPVNTNNESNEASPDDGCRLPDTVTEAEASSDNHGSV) is disordered. Polar residues-rich tracts occupy residues 20–30 (PVNTNNESNEA) and 46–55 (EASSDNHGSV). An N-linked (GlcNAc...) asparagine glycan is attached at N25. A glycan (N-linked (GlcNAc...) asparagine) is linked at N72. Helical transmembrane passes span 94–114 (LSLL…VSIV), 120–140 (FNMA…FLII), 147–167 (IFGC…FSMA), 183–203 (FQGM…PLMV), 214–234 (IMSS…GAIT), 241–261 (WVFY…AFSV), 286–306 (VDFV…FALE), 316–336 (SGAI…FIAW), and 360–380 (FVMG…AALI). An N-linked (GlcNAc...) asparagine glycan is attached at N390. 5 helical membrane-spanning segments follow: residues 402-422 (LPLL…VSKL), 424-444 (VPPL…VGLY), 463-483 (IMGL…PLVV), 498-518 (IRVL…INHI), and 562-582 (EQMR…VLLV).

This sequence belongs to the major facilitator superfamily. TCR/Tet family.

The protein resides in the membrane. Its pathway is secondary metabolite biosynthesis. Functionally, MFS-type transporter; part of the gene cluster that mediates the biosynthesis of the gamma-pyrones fusapyrone (FPY) and deoxyfusapyrone (dFPY). The sequence is that of MFS-type transporter FPY5 from Fusarium mangiferae (Mango malformation disease fungus).